Consider the following 521-residue polypeptide: Importin subunit alpha-3 (521 aa).

Ala-2 carries the post-translational modification N-acetylalanine. The region spanning 2 to 58 (ADNEKLDNQRLKNFKNKGRDLETMRRQRNEVVVELRKNKRDEHLLKRRNVPHEDICE) is the IBB domain. The Nuclear localization signal motif lies at 43–52 (EHLLKRRNVP). Ser-60 carries the phosphoserine modification. The ARM 1; truncated repeat unit spans residues 66 to 106 (YRVQNTSLEAIVQNASSDNQGIQLSAVQAARKLLSSDRNPP). 8 ARM repeats span residues 107-149 (IDDL…TSEQ), 150-194 (TQAV…CRDY), 195-233 (VISL…HKDP), 234-278 (PPPM…EQIQ), 279-318 (MVID…TDEQ), 319-360 (TQVV…NQQQ), 361-400 (VQAV…ISGR), and 401-443 (KDQV…KMAE). The interval 137–229 (WALTNIASGT…VTWVMVNLCR (93 aa)) is NLS binding site (major). Residues 306–394 (RAVGNIVTGT…QKEAAWAISN (89 aa)) are NLS binding site (minor). The stretch at 447 to 485 (ETIGNLIEECGGLEKIEQLQNHENEDIYKLAYEIIDQFF) is one ARM 10; atypical repeat.

This sequence belongs to the importin alpha family. As to quaternary structure, forms a complex with importin subunit beta-1 (KPNB1). Interacts with SNAI1. Interacts with TALDO1 isoform 1. Interacts with CYB1. (Microbial infection) Interacts with MERS virus protein OF4b; this interaction prevents the translocation of NF-kappa-B complex to the nucleus. In terms of assembly, (Microbial infection) Interacts with human adenovirus 5 E1A protein; this interaction allows E1A import into the host nucleus. As to quaternary structure, (Microbial infection) Interacts with Chikungunya virus capsid protein; this interaction allows the nuclear import of the viral capsid protein. As to expression, highly expressed in testis, ovary, small intestine, heart, skeletal muscle, lung and pancreas, but barely detectable in kidney, thymus, colon and peripheral blood leukocytes.

The protein resides in the cytoplasm. The protein localises to the nucleus. Functions in nuclear protein import as an adapter protein for nuclear receptor KPNB1. Binds specifically and directly to substrates containing either a simple or bipartite NLS motif. Docking of the importin/substrate complex to the nuclear pore complex (NPC) is mediated by KPNB1 through binding to nucleoporin FxFG repeats and the complex is subsequently translocated through the pore by an energy requiring, Ran-dependent mechanism. At the nucleoplasmic side of the NPC, Ran binds to importin-beta and the three components separate and importin-alpha and -beta are re-exported from the nucleus to the cytoplasm where GTP hydrolysis releases Ran from importin. The directionality of nuclear import is thought to be conferred by an asymmetric distribution of the GTP- and GDP-bound forms of Ran between the cytoplasm and nucleus. Mediates nuclear import of AARS1, MRTFA and RANBP3. Its function is as follows. (Microbial infection) In vitro, mediates the nuclear import of human cytomegalovirus UL84 by recognizing a non-classical NLS. In vitro, mediates the nuclear import of human cytomegalovirus UL84 by recognizing a non-classical NLS. This is Importin subunit alpha-3 from Homo sapiens (Human).